Here is a 454-residue protein sequence, read N- to C-terminus: Chaperone SurA (454 aa).

An N-terminal signal peptide occupies residues 1–28 (MKISSFRKGRWLGALALFAVVCWSMADA). 2 consecutive PpiC domains span residues 177–278 (DREY…KMLA) and 287–386 (LTKT…QVLE). A disordered region spans residues 431-454 (LDETPASPGEDAPAGEDSPETFMR). Acidic residues predominate over residues 443-454 (PAGEDSPETFMR).

The protein localises to the periplasm. It catalyses the reaction [protein]-peptidylproline (omega=180) = [protein]-peptidylproline (omega=0). Functionally, chaperone involved in the correct folding and assembly of outer membrane proteins. Recognizes specific patterns of aromatic residues and the orientation of their side chains, which are found more frequently in integral outer membrane proteins. May act in both early periplasmic and late outer membrane-associated steps of protein maturation. In Methylococcus capsulatus (strain ATCC 33009 / NCIMB 11132 / Bath), this protein is Chaperone SurA.